The sequence spans 361 residues: Phospho-N-acetylmuramoyl-pentapeptide-transferase (361 aa).

A run of 10 helical transmembrane segments spans residues Ile-27–Trp-47, Gly-70–Trp-90, Ser-97–Tyr-117, Tyr-134–Leu-154, Thr-167–Ser-187, Gly-199–Ser-219, Thr-236–Tyr-256, Val-263–Val-283, Leu-288–Val-308, and Lys-338–Leu-358.

Belongs to the glycosyltransferase 4 family. MraY subfamily. The cofactor is Mg(2+).

The protein localises to the cell inner membrane. It carries out the reaction UDP-N-acetyl-alpha-D-muramoyl-L-alanyl-gamma-D-glutamyl-meso-2,6-diaminopimeloyl-D-alanyl-D-alanine + di-trans,octa-cis-undecaprenyl phosphate = di-trans,octa-cis-undecaprenyl diphospho-N-acetyl-alpha-D-muramoyl-L-alanyl-D-glutamyl-meso-2,6-diaminopimeloyl-D-alanyl-D-alanine + UMP. Its pathway is cell wall biogenesis; peptidoglycan biosynthesis. Its function is as follows. Catalyzes the initial step of the lipid cycle reactions in the biosynthesis of the cell wall peptidoglycan: transfers peptidoglycan precursor phospho-MurNAc-pentapeptide from UDP-MurNAc-pentapeptide onto the lipid carrier undecaprenyl phosphate, yielding undecaprenyl-pyrophosphoryl-MurNAc-pentapeptide, known as lipid I. The chain is Phospho-N-acetylmuramoyl-pentapeptide-transferase from Legionella pneumophila subsp. pneumophila (strain Philadelphia 1 / ATCC 33152 / DSM 7513).